Here is a 172-residue protein sequence, read N- to C-terminus: Gamma-crystallin-4 (172 aa).

Beta/gamma crystallin 'Greek key' domains are found at residues 1–37 (IFFY…RVES) and 38–80 (GNWI…RFIP). Residues 81 to 85 (HPHSQ) are connecting peptide. 2 Beta/gamma crystallin 'Greek key' domains span residues 86 to 126 (YKMR…NVSD) and 127 to 169 (GHWM…RRVH).

This sequence belongs to the beta/gamma-crystallin family. Monomer.

In terms of biological role, crystallins are the dominant structural components of the vertebrate eye lens. This Xenopus laevis (African clawed frog) protein is Gamma-crystallin-4 (cryg4).